Consider the following 628-residue polypeptide: (+)-alpha pinene synthase 1, chloroplastic (628 aa).

The Mg(2+) site is built by Asp-379, Asp-383, and Asp-531. A DDXXD motif motif is present at residues 379–383 (DDIYD).

Belongs to the terpene synthase family. Tpsd subfamily. Requires Mg(2+) as cofactor. It depends on Mn(2+) as a cofactor.

The protein localises to the plastid. It is found in the chloroplast. It carries out the reaction (2E)-geranyl diphosphate = (1R,5R)-alpha-pinene + diphosphate. Its pathway is terpene metabolism; oleoresin biosynthesis. The protein operates within secondary metabolite biosynthesis; terpenoid biosynthesis. Functionally, monoterpene synthase (TPS) involved in the biosynthesis of monoterpene natural products included in conifer oleoresin secretions and volatile emissions; these compounds contribute to biotic and abiotic stress defense against herbivores and pathogens. Catalyzes the conversion of (2E)-geranyl diphosphate (GPP) to (+)-alpha-pinene. In Pinus contorta (Shore pine), this protein is (+)-alpha pinene synthase 1, chloroplastic.